A 92-amino-acid chain; its full sequence is Small ribosomal subunit protein uS19 (92 aa).

It belongs to the universal ribosomal protein uS19 family.

Protein S19 forms a complex with S13 that binds strongly to the 16S ribosomal RNA. This is Small ribosomal subunit protein uS19 from Francisella philomiragia subsp. philomiragia (strain ATCC 25017 / CCUG 19701 / FSC 153 / O#319-036).